The primary structure comprises 691 residues: Two-component response regulator ORR21 (691 aa).

Residues 17 to 132 (KVLVVDDDPT…ELKNIWQHVI (116 aa)) enclose the Response regulatory domain. Asp68 bears the 4-aspartylphosphate mark. Basic and acidic residues predominate over residues 139 to 155 (NKEHEHSGSLDDTDRTR). The segment at 139-204 (NKEHEHSGSL…DPSSTSKKPR (66 aa)) is disordered. A DNA-binding region (myb-like GARP) is located at residues 199-258 (TSKKPRVVWSVELHQQFVNAVNHLGIDKAVPKKILELMNVPGLTRENVASHLQKFRLYLK).

Belongs to the ARR family. Type-B subfamily. Two-component system major event consists of a His-to-Asp phosphorelay between a sensor histidine kinase (HK) and a response regulator (RR). In plants, the His-to-Asp phosphorelay involves an additional intermediate named Histidine-containing phosphotransfer protein (HPt). This multistep phosphorelay consists of a His-Asp-His-Asp sequential transfer of a phosphate group between first a His and an Asp of the HK protein, followed by the transfer to a conserved His of the HPt protein and finally the transfer to an Asp in the receiver domain of the RR protein.

It localises to the nucleus. Its function is as follows. Transcriptional activator that binds specific DNA sequence. Functions as a response regulator involved in His-to-Asp phosphorelay signal transduction system. Phosphorylation of the Asp residue in the receiver domain activates the ability of the protein to promote the transcription of target genes. May directly activate some type-A response regulators in response to cytokinins. This chain is Two-component response regulator ORR21, found in Oryza sativa subsp. japonica (Rice).